A 544-amino-acid chain; its full sequence is Chaperonin GroEL 2 (544 aa).

ATP contacts are provided by residues 29 to 32 (TLGP), 86 to 90 (DGTTT), glycine 413, 479 to 481 (NAA), and aspartate 495.

This sequence belongs to the chaperonin (HSP60) family. Forms a cylinder of 14 subunits composed of two heptameric rings stacked back-to-back. Interacts with the co-chaperonin GroES.

It localises to the cytoplasm. The enzyme catalyses ATP + H2O + a folded polypeptide = ADP + phosphate + an unfolded polypeptide.. In terms of biological role, together with its co-chaperonin GroES, plays an essential role in assisting protein folding. The GroEL-GroES system forms a nano-cage that allows encapsulation of the non-native substrate proteins and provides a physical environment optimized to promote and accelerate protein folding. The chain is Chaperonin GroEL 2 from Prochlorococcus marinus (strain MIT 9515).